The primary structure comprises 386 residues: Cystathionine gamma-synthase (386 aa).

Lysine 198 carries the post-translational modification N6-(pyridoxal phosphate)lysine.

This sequence belongs to the trans-sulfuration enzymes family. As to quaternary structure, homotetramer. Pyridoxal 5'-phosphate is required as a cofactor.

The protein resides in the cytoplasm. The enzyme catalyses O-succinyl-L-homoserine + L-cysteine = L,L-cystathionine + succinate + H(+). The protein operates within amino-acid biosynthesis; L-methionine biosynthesis via de novo pathway; L-cystathionine from O-succinyl-L-homoserine: step 1/1. In terms of biological role, catalyzes the formation of L-cystathionine from O-succinyl-L-homoserine (OSHS) and L-cysteine, via a gamma-replacement reaction. In the absence of thiol, catalyzes gamma-elimination to form 2-oxobutanoate, succinate and ammonia. The chain is Cystathionine gamma-synthase (metB) from Escherichia coli (strain K12).